The primary structure comprises 356 residues: Guanine nucleotide-binding protein alpha-3 subunit (356 aa).

The segment at 1–26 (MGACMSKNDEETEQKKRSQKIDRDLE) is disordered. Gly-2 carries N-myristoyl glycine lipidation. A lipid anchor (S-palmitoyl cysteine) is attached at Cys-4. Positions 7 to 23 (KNDEETEQKKRSQKIDR) are enriched in basic and acidic residues. The 323-residue stretch at 34–356 (KECKILLLGS…NNALKDSGIL (323 aa)) folds into the G-alpha domain. The interval 37–50 (KILLLGSGESGKST) is G1 motif. GTP-binding positions include 42 to 49 (GSGESGKS), 179 to 185 (LRARTKT), 204 to 208 (DVGGQ), 273 to 276 (NKVD), and Ala-328. The Mg(2+) site is built by Ser-49 and Thr-185. A G2 motif region spans residues 177-185 (DVLRARTKT). Residues 200–209 (IHMFDVGGQR) form a G3 motif region. A G4 motif region spans residues 269-276 (ILFLNKVD). The tract at residues 326-331 (TQATDT) is G5 motif.

Belongs to the G-alpha family. G(q) subfamily. As to quaternary structure, g proteins are composed of 3 units; alpha, beta and gamma. The alpha chain contains the guanine nucleotide binding site.

Its function is as follows. Guanine nucleotide-binding proteins (G proteins) are involved as modulators or transducers in various transmembrane signaling systems. Involved in conidiation. This chain is Guanine nucleotide-binding protein alpha-3 subunit (gna-3), found in Neurospora crassa (strain ATCC 24698 / 74-OR23-1A / CBS 708.71 / DSM 1257 / FGSC 987).